Consider the following 121-residue polypeptide: uncharacterized protein (121 aa).

This is an uncharacterized protein from Bacillus subtilis (strain 168).